A 374-amino-acid chain; its full sequence is Flagellar P-ring protein (374 aa).

The first 29 residues, 1–29, serve as a signal peptide directing secretion; sequence MRRVRTTRLFQVACAAIVALASSAMSAHA.

The protein belongs to the FlgI family. As to quaternary structure, the basal body constitutes a major portion of the flagellar organelle and consists of four rings (L,P,S, and M) mounted on a central rod.

It localises to the periplasm. It is found in the bacterial flagellum basal body. Its function is as follows. Assembles around the rod to form the L-ring and probably protects the motor/basal body from shearing forces during rotation. This is Flagellar P-ring protein from Bradyrhizobium sp. (strain BTAi1 / ATCC BAA-1182).